A 542-amino-acid chain; its full sequence is N-substituted formamide deformylase (542 aa).

A propeptide spanning residues 1-2 is cleaved from the precursor; the sequence is MT.

As to quaternary structure, homodimer. Requires Zn(2+) as cofactor.

It carries out the reaction N-benzylformamide + H2O = benzylamine + formate. Its activity is regulated as follows. Completely inhibited by HgCl(2), CuCl, CuCl(2) and AgNO(3). Partially inhibited by ZnCl(2) and SnCl(2). Almost completely inhibited by the reducing reagent DTT. Partially inhibited by phenylhydrazine. Moderately inhibited by phenanthroline and 8-hydroxyquinoline. Completely inhibited by the thiol-specific inhibitors N-ethylmaleimide and p-chloromercuribenzoate. Not inhibited by the carbonyl-specific inhibitors aminoguanidine and semicarbazide, the chelating agents alpha,alpha'-dipyridyl, KCN, diethyldithiocarbamate and EDTA, or the oxidizing reagents and serine-modifying reagents such as H(2)O(2), ammonium persulfate, phenylmethanesulfonyl fluoride and diisopropyl fluorophosphates. In terms of biological role, hydrolyzes N-substituted formamides, but not amides. N-benzylformamide is the preferred substrate, while N-butylformamide is hydrolyzed at a much lower rate. Has very low activity towards allylformamide, N-(2-cyclohex-1-enylethyl)formamide and N-(alpha-methylbenzyl)formamide. This chain is N-substituted formamide deformylase, found in Arthrobacter pascens.